A 130-amino-acid chain; its full sequence is DNA-directed RNA polymerase subunit omega (130 aa).

Disordered stretches follow at residues 79 to 98 (EPEP…VDAD) and 109 to 130 (EEEL…EEDE).

This sequence belongs to the RNA polymerase subunit omega family. The RNAP catalytic core consists of 2 alpha, 1 beta, 1 beta' and 1 omega subunit. When a sigma factor is associated with the core the holoenzyme is formed, which can initiate transcription.

It carries out the reaction RNA(n) + a ribonucleoside 5'-triphosphate = RNA(n+1) + diphosphate. Promotes RNA polymerase assembly. Latches the N- and C-terminal regions of the beta' subunit thereby facilitating its interaction with the beta and alpha subunits. This chain is DNA-directed RNA polymerase subunit omega (rpoZ), found in Bradyrhizobium diazoefficiens (strain JCM 10833 / BCRC 13528 / IAM 13628 / NBRC 14792 / USDA 110).